The primary structure comprises 260 residues: DNA repair protein RecO (260 aa).

It belongs to the RecO family.

Functionally, involved in DNA repair and RecF pathway recombination. This Ligilactobacillus salivarius (strain UCC118) (Lactobacillus salivarius) protein is DNA repair protein RecO.